Consider the following 323-residue polypeptide: Digestive cysteine proteinase 2 (323 aa).

Positions 1-16 (MKVAVLFLCGVALAAA) are cleaved as a signal peptide. Positions 17 to 107 (SPSWEHFKGK…FYPKKETGPQ (91 aa)) are cleaved as a propeptide — activation peptide. 3 cysteine pairs are disulfide-bonded: cysteine 128–cysteine 171, cysteine 162–cysteine 204, and cysteine 263–cysteine 312. Cysteine 131 is an active-site residue. Residues histidine 270 and asparagine 290 contribute to the active site.

This sequence belongs to the peptidase C1 family.

Inhibited by E-64, antipain, leupeptin, heavy metal ions, iodoacetic acid, dithionitrobenzene, p-hydroxymercuri-benzoate; activated by mercaptoethanol and dithiothreitol. The polypeptide is Digestive cysteine proteinase 2 (LCP2) (Homarus americanus (American lobster)).